A 595-amino-acid chain; its full sequence is Phytoene desaturase (595 aa).

The N-terminal stretch at 1–23 (MAETQRPRSAIIVGAGAGGIAVA) is a signal peptide. Residues 574–594 (SQRAFPLLVALMGVLYFLLFV) traverse the membrane as a helical segment.

Belongs to the carotenoid/retinoid oxidoreductase family. NAD(+) is required as a cofactor.

It is found in the membrane. The enzyme catalyses 15-cis-phytoene + A = all-trans-phytofluene + AH2. It catalyses the reaction all-trans-phytofluene + A = all-trans-zeta-carotene + AH2. It carries out the reaction all-trans-zeta-carotene + A = all-trans-neurosporene + AH2. The catalysed reaction is all-trans-neurosporene + A = all-trans-lycopene + AH2. The enzyme catalyses all-trans-lycopene + A = all-trans-3,4-didehydrolycopene + AH2. The protein operates within carotenoid biosynthesis; lycopene biosynthesis. Functionally, phytoene desaturase involved in the carotenoid biosynthesis pathway. Converts phytoene into 3,4-didehydrolycopene via the intermediates phytofluene, zeta-carotene, neurosporene and lycopene, by introducing up to five double bonds into phytoene. Is also able to desaturate 1-hydroxyneurosporene into 1-hydroxylycopene and 1-hydroxylycopene into 1-hydroxy-3,4-didehydrolycopene. Gamma-carotene and 1,19-dihydroxylycopene are not accepted as substrates. Neurosporaxanthin is synthesized from geranyl-geranyl pyrophosphate (GGPP) through several enzymatic activities. Phytoene synthase activity performed by the bifunctional enzyme al-2 first produces phytoene from geranyl-geranyl pyrophosphate (GGPP). The phytoene dehydrogenase al-1 then introduces 5 desaturations to lead to 3,4-didehydrolycopene via the intermediates phytofluene, zeta-carotene, neurosporene and lycopene. Al-2 cyclase activity then converts 3,4-didehydrolycopene into torulene. Al-2 can also convet lycopene into gamma-carotene which in turn is converted to beta-carotene by an additional al-2 cyclization reaction. Torulene is the substrate of the dioxidase cao-2 that breaks the molecule, removing five carbon atoms to yield beta-apo-4'-carotenal, whereas the aldehyde dehydrogenase ylo-1 mediates the last step by converting beta-apo-4'-carotenal into neurosporaxanthin. In Neurospora crassa (strain ATCC 24698 / 74-OR23-1A / CBS 708.71 / DSM 1257 / FGSC 987), this protein is Phytoene desaturase.